A 281-amino-acid chain; its full sequence is NADPH-dependent 7-cyano-7-deazaguanine reductase (281 aa).

88–90 (VES) lines the substrate pocket. Residue 90–91 (SK) participates in NADPH binding. The active-site Thioimide intermediate is Cys189. Catalysis depends on Asp196, which acts as the Proton donor. 228–229 (HE) is a binding site for substrate. Position 257-258 (257-258 (RG)) interacts with NADPH.

It belongs to the GTP cyclohydrolase I family. QueF type 2 subfamily. In terms of assembly, homodimer.

It is found in the cytoplasm. It carries out the reaction 7-aminomethyl-7-carbaguanine + 2 NADP(+) = 7-cyano-7-deazaguanine + 2 NADPH + 3 H(+). The protein operates within tRNA modification; tRNA-queuosine biosynthesis. In terms of biological role, catalyzes the NADPH-dependent reduction of 7-cyano-7-deazaguanine (preQ0) to 7-aminomethyl-7-deazaguanine (preQ1). This Klebsiella pneumoniae subsp. pneumoniae (strain ATCC 700721 / MGH 78578) protein is NADPH-dependent 7-cyano-7-deazaguanine reductase.